The primary structure comprises 164 residues: Transcription elongation factor GreA (164 aa).

The protein belongs to the GreA/GreB family.

Functionally, necessary for efficient RNA polymerase transcription elongation past template-encoded arresting sites. The arresting sites in DNA have the property of trapping a certain fraction of elongating RNA polymerases that pass through, resulting in locked ternary complexes. Cleavage of the nascent transcript by cleavage factors such as GreA or GreB allows the resumption of elongation from the new 3'terminus. GreA releases sequences of 2 to 3 nucleotides. The polypeptide is Transcription elongation factor GreA (Helicobacter pylori (strain J99 / ATCC 700824) (Campylobacter pylori J99)).